The primary structure comprises 1374 residues: F-actin-uncapping protein LRRC16A (1374 aa).

Met-1 is modified (N-acetylmethionine). Residue Ser-122 is modified to Phosphoserine. LRR repeat units lie at residues Ser-245–Ala-269, Asn-275–Ile-298, Pro-304–Gln-327, Ala-336–Gln-363, Leu-391–Gln-418, Ser-423–Gly-447, Ile-485–Ser-510, Asp-547–Ala-570, Asn-574–Lys-597, and Leu-658–Leu-682. Residues Gly-714–Leu-738 are a coiled coil. The residue at position 920 (Thr-920) is a Phosphothreonine. 2 disordered regions span residues Pro-961–Glu-982 and Lys-1040–Val-1374. One copy of the LRR 11 repeat lies at Phe-962–Arg-985. The inhibits capping activity of CP stretch occupies residues Phe-962–Arg-1084. Residue Ser-972 is modified to Phosphoserine. Residues Lys-1040 to Lys-1064 are compositionally biased toward basic and acidic residues. Residues Glu-1058–Glu-1092 form a necessary for localization at the cell membrane region. The residue at position 1096 (Ser-1096) is a Phosphoserine. 2 stretches are compositionally biased toward basic and acidic residues: residues Thr-1108–Glu-1132 and Glu-1141–Ser-1150. Residues Val-1191–Thr-1204 are compositionally biased toward polar residues. A Phosphothreonine modification is found at Thr-1229. Positions Lys-1232 to Cys-1244 are enriched in basic and acidic residues. A compositionally biased stretch (low complexity) spans Arg-1245 to Pro-1263. 7 positions are modified to phosphoserine: Ser-1281, Ser-1289, Ser-1291, Ser-1295, Ser-1319, Ser-1328, and Ser-1335. Positions Gln-1317–Glu-1330 are enriched in low complexity. Basic and acidic residues predominate over residues Gln-1343–Gln-1356. Ser-1363 carries the post-translational modification Phosphoserine.

It belongs to the CARMIL family. In terms of assembly, homodimer. Interacts (via C-terminus) with heterodimeric capping protein (CP); this interaction uncaps barbed ends capped by CP, enhances barbed-end actin polymerization and promotes lamellipodial formation and cell migration. Interacts with MYO1E. Interacts with TRIO.

The protein localises to the cytoplasm. The protein resides in the cytoskeleton. It is found in the cell membrane. It localises to the cell projection. Its subcellular location is the lamellipodium. In terms of biological role, cell membrane-cytoskeleton-associated protein that plays a role in the regulation of actin polymerization at the barbed end of actin filaments. Prevents F-actin heterodimeric capping protein (CP) activity at the leading edges of migrating cells, and hence generates uncapped barbed ends and enhances actin polymerization, however, seems unable to nucleate filaments. Plays a role in lamellipodial protrusion formations and cell migration. The protein is F-actin-uncapping protein LRRC16A of Mus musculus (Mouse).